Here is a 401-residue protein sequence, read N- to C-terminus: MALRVTRNRLASARAELGGKTCSVAGPTQKPRAALGEIGNVAVINKDVTKKNVKTEVAKKTKVPAKAEKIEQPKAAVVPVKPAPEVQVPAQPEPASPTPMETSGCEPADLCQAFSDVILNTAIRDVDADDYNNPLLCSEYVKDIYKYLRQLEVEQSVKPNYLEGQEVTGNMRALLIDWLVQVSLKFRLLQETMYMTVGIIDRFLQDHPVPKKQLQLVGVTAMFLASKYEEMYPPEISDFAYVTDKAYTTAQIRDMEMTILRVLKFQLGRPLPLQFLRRASKIYEVTAEQHTLAKYLLELSMVDYAMDHFPPSMVASAALALTLKVLDAGEWDVTLQHYMAYTADTLTPVMAHIAKNVVKVNNGQTKHMTIKGKYFTSKQMRIATIFQLKSSVVKDLATQIS.

It belongs to the cyclin family. Cyclin AB subfamily. In terms of assembly, interacts with the CDK1 protein kinase to form a serine/threonine kinase holoenzyme complex also known as maturation promoting factor (MPF). The cyclin subunit imparts substrate specificity to the complex.

Its function is as follows. Essential for the control of the cell cycle at the G2/M (mitosis) transition. The polypeptide is G2/mitotic-specific cyclin-B1 (ccnb1) (Oryzias luzonensis (Luzon ricefish)).